We begin with the raw amino-acid sequence, 75 residues long: U6-lycotoxin-Ls1g (75 aa).

Residues 1-21 form the signal peptide; sequence MKLLLFTALVLVVISLIEVEA. Positions 22–25 are excised as a propeptide; that stretch reads ENER.

This sequence belongs to the neurotoxin 19 (CSTX) family. 06 (U6-Lctx) subfamily. Post-translationally, contains 4 disulfide bonds. As to expression, expressed by the venom gland.

The protein resides in the secreted. This Lycosa singoriensis (Wolf spider) protein is U6-lycotoxin-Ls1g.